The primary structure comprises 237 residues: Phosphoserine phosphatase (237 aa).

The active-site Nucleophile is the aspartate 39. Mg(2+) is bound by residues aspartate 39 and glutamate 41. Catalysis depends on glutamate 41, which acts as the Proton donor. Substrate-binding positions include glutamate 47, arginine 78, serine 122 to aspartate 123, and lysine 165. Position 184 (aspartate 184) interacts with Mg(2+). Asparagine 187 contacts substrate.

It belongs to the thrH family. Mg(2+) serves as cofactor.

It catalyses the reaction O-phospho-L-serine + H2O = L-serine + phosphate. The catalysed reaction is O-phospho-D-serine + H2O = D-serine + phosphate. The protein operates within amino-acid biosynthesis; L-serine biosynthesis; L-serine from 3-phospho-D-glycerate: step 3/3. In terms of biological role, phosphoserine phosphatase that mediates dephosphorylation of phosphoserine in the serine biosynthesis pathway. Also able to dephosphorylate phospho-threonine. The protein is Phosphoserine phosphatase of Pseudomonas syringae pv. tomato (strain ATCC BAA-871 / DC3000).